Reading from the N-terminus, the 544-residue chain is Sialidase (544 aa).

The first 22 residues, 1–22 (MKKAVILFSLFCFLCAIPVVQA), serve as a signal peptide directing secretion. BNR repeat units follow at residues 239–250 (SRSTDGGKTWEK), 318–329 (AKSTDDGKTWSA), and 378–389 (MYSKDGGKNWKM). Glu399 is a catalytic residue. Arg415 is a substrate binding site. A BNR 4 repeat occupies 425-436 (AITKDLGKTWTE). Arg479 is a binding site for substrate. A BNR 5 repeat occupies 485–496 (KISLDGGVTWSP).

This sequence belongs to the glycosyl hydrolase 33 family.

The protein localises to the periplasm. The catalysed reaction is Hydrolysis of alpha-(2-&gt;3)-, alpha-(2-&gt;6)-, alpha-(2-&gt;8)- glycosidic linkages of terminal sialic acid residues in oligosaccharides, glycoproteins, glycolipids, colominic acid and synthetic substrates.. In terms of biological role, sialidases have been suggested to be pathogenic factors in microbial infections. The chain is Sialidase (nanH) from Bacteroides fragilis (strain YCH46).